Here is a 589-residue protein sequence, read N- to C-terminus: Arginine--tRNA ligase (589 aa).

Positions 131–141 (ANPTGPLHVGH) match the 'HIGH' region motif.

The protein belongs to the class-I aminoacyl-tRNA synthetase family. In terms of assembly, monomer.

The protein localises to the cytoplasm. The enzyme catalyses tRNA(Arg) + L-arginine + ATP = L-arginyl-tRNA(Arg) + AMP + diphosphate. This Legionella pneumophila subsp. pneumophila (strain Philadelphia 1 / ATCC 33152 / DSM 7513) protein is Arginine--tRNA ligase.